Consider the following 361-residue polypeptide: MAQPGDPRRLCRLVQEGRLRALKEELQAAGGCPGPAGDTLLHCAARHGHRDVLAYLAEAWGMDIEATNRDYKRPLHEAASMGHRDCVRYLLGRGAAVDCLKKADWTPLMMACTRKNLGVIQELVEHGANPLLKNKDGWNSFHIASREGDPLILQYLLTVCPGAWKTESKIRRTPLHTAAMHGHLEAVKVLLKRCQYEPDYRDNCGVTALMDAIQCGHIDVARLLLDEHGACLSAEDSLGAQALHRAAVTGQDEAIRFLVSELGVDVDVRATSTHLTALHYAAKEGHTSTIQTLLSLGADINSKDEKNRSALHLACAGQHLACAKFLLQSGLKDSEDITGTLAQQLPRRADVLQGSGHSAMT.

ANK repeat units lie at residues 36–66 (AGDTLLHCAARHGHRDVLAYLAEAWGMDIEA), 70–99 (DYKRPLHEAASMGHRDCVRYLLGRGAAVDC), 103–132 (ADWTPLMMACTRKNLGVIQELVEHGANPLL), 136–165 (DGWNSFHIASREGDPLILQYLLTVCPGAWK), 170–200 (IRRTPLHTAAMHGHLEAVKVLLKRCQYEPDY), 204–234 (CGVTALMDAIQCGHIDVARLLLDEHGACLSA), 238–268 (LGAQALHRAAVTGQDEAIRFLVSELGVDVDV), 273–302 (THLTALHYAAKEGHTSTIQTLLSLGADINS), and 306–335 (KNRSALHLACAGQHLACAKFLLQSGLKDSE).

In terms of assembly, interacts with AARS; the interaction is direct.

The protein localises to the cytoplasm. The protein resides in the nucleus. In terms of biological role, required to prevent the misactivation of serine (Ser) with tRNA(Ala) by promoting the hydrolysis of Ser-mischarged tRNA(Ala), thereby playing a role in translational fidelity. Binds directly to the catalytic domain of AARS/AlaRS and captures Ser that is misactivated by AARS/AlaRS, preventing the charging of Ser adenylates to tRNA(Ala) and precluding Ser misincorporation in nascent peptides. The chain is Ankyrin repeat domain-containing protein 16 from Homo sapiens (Human).